The sequence spans 87 residues: MSFLDSLFGKRQRSSDIARDRLLTVLVHDRVKLTPDMMEQLKAELSTVIARYVPSVDAGAIEVTLMRGEAVDHLKADIPLRRTSQKL.

This sequence belongs to the MinE family.

In terms of biological role, prevents the cell division inhibition by proteins MinC and MinD at internal division sites while permitting inhibition at polar sites. This ensures cell division at the proper site by restricting the formation of a division septum at the midpoint of the long axis of the cell. The polypeptide is Cell division topological specificity factor (Roseiflexus castenholzii (strain DSM 13941 / HLO8)).